Consider the following 294-residue polypeptide: 4-hydroxy-tetrahydrodipicolinate synthase (294 aa).

Thr-47 contributes to the pyruvate binding site. Tyr-135 serves as the catalytic Proton donor/acceptor. Catalysis depends on Lys-163, which acts as the Schiff-base intermediate with substrate. Residue Ile-205 participates in pyruvate binding.

It belongs to the DapA family. Homotetramer; dimer of dimers.

Its subcellular location is the cytoplasm. It catalyses the reaction L-aspartate 4-semialdehyde + pyruvate = (2S,4S)-4-hydroxy-2,3,4,5-tetrahydrodipicolinate + H2O + H(+). Its pathway is amino-acid biosynthesis; L-lysine biosynthesis via DAP pathway; (S)-tetrahydrodipicolinate from L-aspartate: step 3/4. Functionally, catalyzes the condensation of (S)-aspartate-beta-semialdehyde [(S)-ASA] and pyruvate to 4-hydroxy-tetrahydrodipicolinate (HTPA). The polypeptide is 4-hydroxy-tetrahydrodipicolinate synthase (Rickettsia typhi (strain ATCC VR-144 / Wilmington)).